The following is a 634-amino-acid chain: Phototropic-responsive NPH3 family protein NPY2 (634 aa).

In terms of domain architecture, BTB spans 29–97 (SDISVDVEGS…CYGMTVTLSA (69 aa)). The 282-residue stretch at 207-488 (DWWVEDLCEL…VQVLFFEQVR (282 aa)) folds into the NPH3 domain. Position 429 is a phosphotyrosine (tyrosine 429). 2 disordered regions span residues 492–517 (SSGS…YGSS) and 584–634 (QLQS…VSVS). A compositionally biased stretch (gly residues) spans 588 to 602 (KGGGEKNNGGGGGGS). Over residues 619–634 (KTATPSRNLTRRVSVS) the composition is skewed to polar residues.

This sequence belongs to the NPH3 family. In terms of tissue distribution, specifically expressed in the hypophysis and the root meristems in the embryos. Highly expressed in primary root tips and radicles.

The protein resides in the cell membrane. The protein localises to the cytoplasm. It is found in the cytosol. Its pathway is protein modification; protein ubiquitination. May act as a substrate-specific adapter of an E3 ubiquitin-protein ligase complex (CUL3-RBX1-BTB) which mediates the ubiquitination and subsequent proteasomal degradation of target proteins. Plays an essential role in auxin-mediated organogenesis and in root gravitropic responses through the control of PIN proteins (e.g. PIN1 and PIN2) polarity in the root tip endodermal cell layer and in shoot epidermis. Recruited to the plasma membrane by PINs (e.g. PIN1 and PIN2) and, in concert with AGC kinases-mediated (e.g. D6PK and PID) PINs phosphorylation, maintains their polarity through limiting lateral diffusion-based escape. The polypeptide is Phototropic-responsive NPH3 family protein NPY2 (Arabidopsis thaliana (Mouse-ear cress)).